The following is a 196-amino-acid chain: MIRELFEKEGFTLDEEQERKFSIYLQELLRWNKVHNLTSIKKPEEIVRRHFIDSVSVVRCFERIGLDLRGKHFADVGSGAGFPGVPLKIYLKDIKLTLIESVSKKCSFLEYLKIKLNEDYRVLCTRAEKVEEKFDVVLARALGEFEEVKEILEKLSIGYVFVYKGSKLKEEWLKDYKLCELSLSFMPKSYILWKKV.

Residues Gly-77, Phe-82, 127-128 (AE), and Arg-140 each bind S-adenosyl-L-methionine.

Belongs to the methyltransferase superfamily. RNA methyltransferase RsmG family.

It localises to the cytoplasm. In terms of biological role, specifically methylates the N7 position of a guanine in 16S rRNA. The polypeptide is Ribosomal RNA small subunit methyltransferase G (Aquifex aeolicus (strain VF5)).